The following is a 41-amino-acid chain: Chymotrypsin inhibitor (41 aa).

Functionally, inhibits chymotrypsin. The sequence is that of Chymotrypsin inhibitor from Eisenia hortensis (European nightcrawler).